The sequence spans 146 residues: 3-dehydroquinate dehydratase (146 aa).

The active-site Proton acceptor is the tyrosine 22. Substrate contacts are provided by asparagine 73, histidine 79, and aspartate 86. Histidine 101 functions as the Proton donor in the catalytic mechanism. Substrate-binding positions include 102-103 (IS) and arginine 112.

This sequence belongs to the type-II 3-dehydroquinase family. Homododecamer.

It catalyses the reaction 3-dehydroquinate = 3-dehydroshikimate + H2O. It functions in the pathway metabolic intermediate biosynthesis; chorismate biosynthesis; chorismate from D-erythrose 4-phosphate and phosphoenolpyruvate: step 3/7. Catalyzes a trans-dehydration via an enolate intermediate. In Corynebacterium pseudotuberculosis (strain C231), this protein is 3-dehydroquinate dehydratase (aroQ).